The chain runs to 168 residues: Large ribosomal subunit protein uL10 (168 aa).

This sequence belongs to the universal ribosomal protein uL10 family. In terms of assembly, part of the ribosomal stalk of the 50S ribosomal subunit. The N-terminus interacts with L11 and the large rRNA to form the base of the stalk. The C-terminus forms an elongated spine to which L12 dimers bind in a sequential fashion forming a multimeric L10(L12)X complex.

Functionally, forms part of the ribosomal stalk, playing a central role in the interaction of the ribosome with GTP-bound translation factors. This is Large ribosomal subunit protein uL10 from Lacticaseibacillus casei (strain BL23) (Lactobacillus casei).